A 592-amino-acid polypeptide reads, in one-letter code: Putative nucleoside-triphosphatase (592 aa).

The Proton acceptor role is filled by Glu200.

The protein belongs to the GDA1/CD39 NTPase family.

The enzyme catalyses a ribonucleoside 5'-triphosphate + H2O = a ribonucleoside 5'-diphosphate + phosphate + H(+). In Toxoplasma gondii, this protein is Putative nucleoside-triphosphatase (NTP4).